The sequence spans 159 residues: Transcriptional repressor NrdR (159 aa).

A zinc finger lies at 3–34; it reads CPFCRHDDTQVVDSRVSEDGAAIRRRRRCSAC. An ATP-cone domain is found at 49 to 139; it reads PAVVKKDGSR…VYRRFEDVSE (91 aa).

The protein belongs to the NrdR family. It depends on Zn(2+) as a cofactor.

Functionally, negatively regulates transcription of bacterial ribonucleotide reductase nrd genes and operons by binding to NrdR-boxes. The chain is Transcriptional repressor NrdR from Burkholderia thailandensis (strain ATCC 700388 / DSM 13276 / CCUG 48851 / CIP 106301 / E264).